The following is a 713-amino-acid chain: MFNKQSVSLEWAGRTLTIETGQVARQADGAVMVQYGDTIVLATAVFAKEAKPGQDFFPLTVNYQEKYFASGRIPGGFFKREGRPTEKETLTSRLIDRPIRPLFVDGFKHEVQVVVTTLSYDLENDADIIALVGASAALVLSGAPFMGPIGAARVGYKDGQYIINPTIAELEESELDLVVAGTTDAVMMVESQAAELSEDVMLGAVVAGHDAMQPVIDAIIALAEKAAKEPFAYEPPDHSAALKSVIDTVGADLSKAYKITAKGERYAAIGAAKDKAKAALLGTDEAPGVMTPEVFKTVFKEAEASVVRGDILKTGQRIDGRKLDQIRPIVAEAGFLPRTHGSSLFTRGETQAICVATLGTSDDEQYIDGLDGTKKEKFMLHYNFPPYSVGETGRMGGAGRREIGHGKLAWRALKAVLPKHEDFPYTIRMVSEITESNGSSSMATVCGCSLAMMDAGVPLTRPVSGIAMGLILEGSEFAVLSDILGDEDHLGDMDFKVAGTENGVTSLQMDIKVAGITKDIMGKALEQAKGGRMHILGEMGKALTASRGQLSENAPQMEIIKVPTDKIRDVIGSGGKVIRGIVDETGAKVNIDDDGTVQISAMDRKSIDAAIKMIKGITAEAEVGEIYEGKVVSMKDFGIFVNFFGPKDGLVHVSQMANKRIGHPKEMVKEGDKVWVKLMGFDERGKVRLSMKVVDQETGKELAEEAGDDASED.

Mg(2+)-binding residues include D488 and D494. In terms of domain architecture, KH spans 555-614 (PQMEIIKVPTDKIRDVIGSGGKVIRGIVDETGAKVNIDDDGTVQISAMDRKSIDAAIKMI). The region spanning 624–692 (GEIYEGKVVS…ERGKVRLSMK (69 aa)) is the S1 motif domain.

This sequence belongs to the polyribonucleotide nucleotidyltransferase family. The cofactor is Mg(2+).

The protein localises to the cytoplasm. The catalysed reaction is RNA(n+1) + phosphate = RNA(n) + a ribonucleoside 5'-diphosphate. Involved in mRNA degradation. Catalyzes the phosphorolysis of single-stranded polyribonucleotides processively in the 3'- to 5'-direction. The chain is Polyribonucleotide nucleotidyltransferase from Hyphomonas neptunium (strain ATCC 15444).